Reading from the N-terminus, the 416-residue chain is Phosphoglycerate kinase (416 aa).

Substrate-binding positions include 24 to 26, Arg40, 63 to 66, Arg126, and Arg166; these read DLN and HLGR. Residues Lys216, Gly304, Glu335, and 364–367 contribute to the ATP site; that span reads GGDS.

This sequence belongs to the phosphoglycerate kinase family. In terms of assembly, monomer.

The protein localises to the cytoplasm. The enzyme catalyses (2R)-3-phosphoglycerate + ATP = (2R)-3-phospho-glyceroyl phosphate + ADP. It participates in carbohydrate degradation; glycolysis; pyruvate from D-glyceraldehyde 3-phosphate: step 2/5. The protein is Phosphoglycerate kinase of Mycobacterium leprae (strain Br4923).